Reading from the N-terminus, the 403-residue chain is MINPLRGMKDLTFDEAQRFVHIVKTAITIAKRYGYSYIETPILEETALFKRSVGDSSDIVSKEMYQFEDKGGNDVCMRPEGTAGVVRAFISAKLDRQPVKQKFYYYGPMFRYERPQKGRLREFHQFGCESFGEASVYEDFTIIIMISQIFQALGIGFELKINSLGCPECMPPYRQNLVGFLTEISEDLCTDCNRRIGMNPIRVLDCKNEACQSLLKQSPKLIENLCEHCDTDFKKLTVLLDDAGIAYEVDTNLVRGLDYYNKTAFEFVSNEIGSQSAIAGGGRYDKLVEYLDGKPTPAVGFAIGIERIMELVQMPETKKEGYYMGAMIPEAIEKIIMLGNRKRATDKVTVEYSSKGFKSHMKGVDKANARYALLIGEDELKNGTVWLKDLETKEEKSILLSEV.

Belongs to the class-II aminoacyl-tRNA synthetase family. As to quaternary structure, homodimer.

Its subcellular location is the cytoplasm. It carries out the reaction tRNA(His) + L-histidine + ATP = L-histidyl-tRNA(His) + AMP + diphosphate + H(+). The polypeptide is Histidine--tRNA ligase (Sulfurovum sp. (strain NBC37-1)).